Reading from the N-terminus, the 237-residue chain is ATP-dependent dethiobiotin synthetase BioD (237 aa).

An ATP-binding site is contributed by 21–26 (GVGKTV). Thr-25 serves as a coordination point for Mg(2+). Lys-48 is a catalytic residue. Thr-52 is a substrate binding site. Residues Asp-56, 117–120 (EALG), 177–178 (SC), and 209–211 (PYL) each bind ATP. Positions 56 and 117 each coordinate Mg(2+).

The protein belongs to the dethiobiotin synthetase family. Homodimer. It depends on Mg(2+) as a cofactor.

It is found in the cytoplasm. The enzyme catalyses (7R,8S)-7,8-diammoniononanoate + CO2 + ATP = (4R,5S)-dethiobiotin + ADP + phosphate + 3 H(+). The catalysed reaction is (7R,8S)-8-amino-7-(carboxyamino)nonanoate + ATP = (4R,5S)-dethiobiotin + ADP + phosphate + H(+). It functions in the pathway cofactor biosynthesis; biotin biosynthesis; biotin from 7,8-diaminononanoate: step 1/2. Catalyzes a mechanistically unusual reaction, the ATP-dependent insertion of CO2 between the N7 and N8 nitrogen atoms of 7,8-diaminopelargonic acid (DAPA, also called 7,8-diammoniononanoate) to form a ureido ring. This cyanobacterium does not encode bioA (which catalyzes the formation of the precursor for this reaction in the cannonical pathway), instead it encodes bioU, which replaces bioA and also performs the first half of the cannonical BioD reaction. Thus in this bacteria BioD has a different substrate. In Synechocystis replacement of bioU by bioA from E.coli leads to biotin synthesis, showing BioD can use the 'cannonical' 7,8-diammoniononanoate as a substrate. The polypeptide is ATP-dependent dethiobiotin synthetase BioD (Synechocystis sp. (strain ATCC 27184 / PCC 6803 / Kazusa)).